The following is a 467-amino-acid chain: Pentatricopeptide repeat-containing protein At1g77170, mitochondrial (467 aa).

Residues 1–30 (MFFSGLISKLHVHGTKRTNHFTIFHRLNHF) constitute a mitochondrion transit peptide. PPR repeat units follow at residues 81–115 (IAFL…TVLP), 116–150 (DRYS…GFVG), 151–181 (DEFC…NPER), 182–216 (KLGS…GLEP), 217–251 (DDFT…KTEE), 254–284 (DIMM…MRQR), 285–319 (NVVS…GVRP), 320–350 (NKIT…MKSE), and 356–386 (GLSH…MPMK). Residues 391–466 (VWGCLMGGCE…IPAYSYASTT (76 aa)) form a type E motif region.

It belongs to the PPR family. PCMP-E subfamily.

The protein resides in the mitochondrion. This Arabidopsis thaliana (Mouse-ear cress) protein is Pentatricopeptide repeat-containing protein At1g77170, mitochondrial (PCMP-E21).